Reading from the N-terminus, the 247-residue chain is uncharacterized protein (247 aa).

6 consecutive transmembrane segments (helical) span residues 19–39, 73–93, 106–126, 155–175, 196–216, and 217–237; these read IFFTFLLCFIICTIYSESIMF, FFTSIYCTFPYFFYQFWAFFI, FLSFFFFTLLFFSCIIIYFII, YIQFTFQIFSYFFVLFQCPLF, YIYFLFLILAAFLSPPDILSQ, and FFLFSLIVFMYELCVFYSCFY.

The protein belongs to the TatC family.

It is found in the mitochondrion membrane. This is an uncharacterized protein from Nephroselmis olivacea (Green alga).